A 232-amino-acid chain; its full sequence is Alpha N-terminal protein methyltransferase 1 (232 aa).

S-adenosyl-L-methionine contacts are provided by residues Gly71, Arg76, 123–124 (MQ), and Gln139.

It belongs to the methyltransferase superfamily. NTM1 family.

It is found in the cytoplasm. The enzyme catalyses N-terminal L-alanyl-L-prolyl-L-lysyl-[protein] + 3 S-adenosyl-L-methionine = N-terminal N,N,N-trimethyl-L-alanyl-L-prolyl-L-lysyl-[protein] + 3 S-adenosyl-L-homocysteine + 3 H(+). It catalyses the reaction N-terminal L-seryl-L-prolyl-L-lysyl-[protein] + 3 S-adenosyl-L-methionine = N-terminal N,N,N-trimethyl-L-seryl-L-prolyl-L-lysyl-[protein] + 3 S-adenosyl-L-homocysteine + 3 H(+). The catalysed reaction is N-terminal L-prolyl-L-prolyl-L-lysyl-[protein] + 2 S-adenosyl-L-methionine = N-terminal N,N-dimethyl-L-prolyl-L-prolyl-L-lysyl-[protein] + 2 S-adenosyl-L-homocysteine + 2 H(+). Alpha-N-methyltransferase that methylates the N-terminus of target proteins containing the N-terminal motif [Ala/Pro/Ser]-Pro-Lys when the initiator Met is cleaved. Specifically catalyzes mono-, di- or tri-methylation of exposed alpha-amino group of Ala or Ser residue in the [Ala/Ser]-Pro-Lys motif and mono- or di-methylation of Pro in the Pro-Pro-Lys motif. Responsible for the N-terminal methylation of the ribosomal proteins RPL12A, RPL12B, RPS25A and RPS25B. The protein is Alpha N-terminal protein methyltransferase 1 (TAE1) of Saccharomyces cerevisiae (strain ATCC 204508 / S288c) (Baker's yeast).